Here is a 273-residue protein sequence, read N- to C-terminus: Dermonecrotic toxin SdSicTox-betaIIB1aiii (273 aa).

Residue His4 is part of the active site. Mg(2+)-binding residues include Glu24 and Asp26. The active-site Nucleophile is His40. 2 disulfides stabilise this stretch: Cys44-Cys50 and Cys46-Cys189. Position 84 (Asp84) interacts with Mg(2+).

This sequence belongs to the arthropod phospholipase D family. Class II subfamily. Mg(2+) is required as a cofactor. In terms of tissue distribution, expressed by the venom gland.

It is found in the secreted. The enzyme catalyses an N-(acyl)-sphingosylphosphocholine = an N-(acyl)-sphingosyl-1,3-cyclic phosphate + choline. It carries out the reaction an N-(acyl)-sphingosylphosphoethanolamine = an N-(acyl)-sphingosyl-1,3-cyclic phosphate + ethanolamine. The catalysed reaction is a 1-acyl-sn-glycero-3-phosphocholine = a 1-acyl-sn-glycero-2,3-cyclic phosphate + choline. It catalyses the reaction a 1-acyl-sn-glycero-3-phosphoethanolamine = a 1-acyl-sn-glycero-2,3-cyclic phosphate + ethanolamine. Functionally, dermonecrotic toxins cleave the phosphodiester linkage between the phosphate and headgroup of certain phospholipids (sphingolipid and lysolipid substrates), forming an alcohol (often choline) and a cyclic phosphate. This toxin acts on sphingomyelin (SM). It may also act on ceramide phosphoethanolamine (CPE), lysophosphatidylcholine (LPC) and lysophosphatidylethanolamine (LPE), but not on lysophosphatidylserine (LPS), and lysophosphatidylglycerol (LPG). It acts by transphosphatidylation, releasing exclusively cyclic phosphate products as second products. Induces dermonecrosis, hemolysis, increased vascular permeability, edema, inflammatory response, and platelet aggregation. The sequence is that of Dermonecrotic toxin SdSicTox-betaIIB1aiii from Sicarius cf. damarensis (strain GJB-2008) (Six-eyed sand spider).